The chain runs to 73 residues: uncharacterized protein (73 aa).

Helical transmembrane passes span 10–30 (ILLA…YVSA) and 42–62 (YSTV…IYLI).

Its subcellular location is the cell membrane. This is an uncharacterized protein from Archaeoglobus fulgidus (strain ATCC 49558 / DSM 4304 / JCM 9628 / NBRC 100126 / VC-16).